Here is a 163-residue protein sequence, read N- to C-terminus: Nucleotide-binding protein C8J_0350 (163 aa).

This sequence belongs to the YajQ family.

Functionally, nucleotide-binding protein. The protein is Nucleotide-binding protein C8J_0350 of Campylobacter jejuni subsp. jejuni serotype O:6 (strain 81116 / NCTC 11828).